The following is a 525-amino-acid chain: Tigger transposable element-derived protein 2 (525 aa).

The HTH psq-type domain maps to 1–52 (MLGKRKRVVLTIKDKLDIIKKLEEGNSFKKLSVLYGIGESTVRDIKKNKERI). 2 DNA-binding regions (H-T-H motif) span residues 28-48 (FKKL…IKKN) and 100-132 (TICA…FKQR). In terms of domain architecture, HTH CENPB-type spans 67–139 (KRKSMKSSTY…KQRHGIPKAA (73 aa)). In terms of domain architecture, DDE-1 spans 168–385 (LLPEQIYGAD…IRSNTITRAW (218 aa)).

Belongs to the tigger transposable element derived protein family.

It localises to the nucleus. This chain is Tigger transposable element-derived protein 2 (Tigd2), found in Mus musculus (Mouse).